Here is a 264-residue protein sequence, read N- to C-terminus: Thymidylate synthase (264 aa).

Arg-21 serves as a coordination point for dUMP. His-51 contacts (6R)-5,10-methylene-5,6,7,8-tetrahydrofolate. Position 126 to 127 (126 to 127) interacts with dUMP; it reads RR. Cys-146 acts as the Nucleophile in catalysis. DUMP contacts are provided by residues 166–169, Asn-177, and 207–209; these read RSAD and HIY. Asp-169 is a (6R)-5,10-methylene-5,6,7,8-tetrahydrofolate binding site. Residue Ala-263 participates in (6R)-5,10-methylene-5,6,7,8-tetrahydrofolate binding.

Belongs to the thymidylate synthase family. Bacterial-type ThyA subfamily. As to quaternary structure, homodimer.

The protein localises to the cytoplasm. It carries out the reaction dUMP + (6R)-5,10-methylene-5,6,7,8-tetrahydrofolate = 7,8-dihydrofolate + dTMP. Its pathway is pyrimidine metabolism; dTTP biosynthesis. Catalyzes the reductive methylation of 2'-deoxyuridine-5'-monophosphate (dUMP) to 2'-deoxythymidine-5'-monophosphate (dTMP) while utilizing 5,10-methylenetetrahydrofolate (mTHF) as the methyl donor and reductant in the reaction, yielding dihydrofolate (DHF) as a by-product. This enzymatic reaction provides an intracellular de novo source of dTMP, an essential precursor for DNA biosynthesis. This is Thymidylate synthase from Brucella anthropi (strain ATCC 49188 / DSM 6882 / CCUG 24695 / JCM 21032 / LMG 3331 / NBRC 15819 / NCTC 12168 / Alc 37) (Ochrobactrum anthropi).